Reading from the N-terminus, the 297-residue chain is tRNA-cytidine(32) 2-sulfurtransferase (297 aa).

The short motif at 45 to 50 (SGGKDS) is the PP-loop motif element. Residues C120, C123, and C211 each contribute to the [4Fe-4S] cluster site.

Belongs to the TtcA family. As to quaternary structure, homodimer. It depends on Mg(2+) as a cofactor. [4Fe-4S] cluster serves as cofactor.

It is found in the cytoplasm. The catalysed reaction is cytidine(32) in tRNA + S-sulfanyl-L-cysteinyl-[cysteine desulfurase] + AH2 + ATP = 2-thiocytidine(32) in tRNA + L-cysteinyl-[cysteine desulfurase] + A + AMP + diphosphate + H(+). The protein operates within tRNA modification. Catalyzes the ATP-dependent 2-thiolation of cytidine in position 32 of tRNA, to form 2-thiocytidine (s(2)C32). The sulfur atoms are provided by the cysteine/cysteine desulfurase (IscS) system. This Vibrio parahaemolyticus serotype O3:K6 (strain RIMD 2210633) protein is tRNA-cytidine(32) 2-sulfurtransferase.